A 535-amino-acid polypeptide reads, in one-letter code: uncharacterized protein (535 aa).

Helical transmembrane passes span 55–75 (LITIICHLFLLLNIFISIPII), 82–102 (FMPVGFTALAAILLAMQIMFV), 115–135 (IICFLLAIDVLVVFLSPILRH), 143–163 (AFVLWAFLMSLWIVITDLMLF), 201–221 (STILSVILTILTIHTLVTLIM), and 346–366 (VSGPYVLVAHGIGGVYSNVFA).

It localises to the membrane. This is an uncharacterized protein from Schizosaccharomyces pombe (strain 972 / ATCC 24843) (Fission yeast).